Here is a 707-residue protein sequence, read N- to C-terminus: Ribosomal RNA large subunit methyltransferase K/L (707 aa).

Positions 44-155 (VIYNLCLWSR…NDILTVSFDL (112 aa)) constitute a THUMP domain.

This sequence belongs to the methyltransferase superfamily. RlmKL family.

It is found in the cytoplasm. The enzyme catalyses guanosine(2445) in 23S rRNA + S-adenosyl-L-methionine = N(2)-methylguanosine(2445) in 23S rRNA + S-adenosyl-L-homocysteine + H(+). It catalyses the reaction guanosine(2069) in 23S rRNA + S-adenosyl-L-methionine = N(2)-methylguanosine(2069) in 23S rRNA + S-adenosyl-L-homocysteine + H(+). Specifically methylates the guanine in position 2445 (m2G2445) and the guanine in position 2069 (m7G2069) of 23S rRNA. This is Ribosomal RNA large subunit methyltransferase K/L from Legionella pneumophila (strain Paris).